A 398-amino-acid chain; its full sequence is Phosphoglycerate kinase (398 aa).

Residues 21 to 23, Arg-36, 59 to 62, Arg-119, and Arg-157 contribute to the substrate site; these read DFN and HLGR. ATP contacts are provided by residues Lys-208, Gly-296, Glu-327, and 354–357; that span reads GGDS.

It belongs to the phosphoglycerate kinase family. Monomer.

It is found in the cytoplasm. The enzyme catalyses (2R)-3-phosphoglycerate + ATP = (2R)-3-phospho-glyceroyl phosphate + ADP. It functions in the pathway carbohydrate degradation; glycolysis; pyruvate from D-glyceraldehyde 3-phosphate: step 2/5. The chain is Phosphoglycerate kinase from Streptococcus equi subsp. zooepidemicus (strain H70).